Consider the following 248-residue polypeptide: Chromatin target of PRMT1 protein (248 aa).

The residue at position 2 (Ala2) is an N-acetylalanine. Thr33 is subject to Phosphothreonine. 3 positions are modified to phosphoserine: Ser40, Ser49, and Ser64. Lys70 participates in a covalent cross-link: Glycyl lysine isopeptide (Lys-Gly) (interchain with G-Cter in SUMO2). The segment at Leu151–Gly204 is disordered. The tract at residues Arg153–Leu206 is interaction with PRMT1. Residues Arg157–Arg195 show a composition bias toward gly residues. Residues Gly194–Arg203 carry the GAR motif; involved in 5hmC binding motif. At Thr242 the chain carries Phosphothreonine.

As to quaternary structure, interacts with PRMT1 and PRMT5. Interacts with the 5FMC complex; the interaction is methylation-dependent. Interacts with FYTTD1, SET and PRC1 complex members CBX4, RNF2 and PHC2; the interactions are methylation-independent. Interacts with ZNF148. Component of the transcription/export (TREX) complex at least composed of ALYREF/THOC4, DDX39B, SARNP/CIP29, CHTOP and the THO subcomplex; TREX seems to have dynamic structure involving ATP-dependent remodeling; in the complex interacts (methylated) with ALYREF/THOC4 and with DDX39B in a methylation-independent manner. Interacts (methylated) with NXF1; the interaction is mutually exclusive with the NXF1:THOC5 interaction. Interacts with WDR77 and ERH. Post-translationally, asymmetrically methylated by PRMT1. Symmetrically methylated by PRMT5. In terms of tissue distribution, expressed in an erythroid progenitor cell line derived from peripheral blood. Expressed in glioblastoma cells.

It is found in the nucleus. It localises to the nucleolus. The protein resides in the nucleoplasm. The protein localises to the nucleus speckle. Functionally, plays an important role in the ligand-dependent activation of estrogen receptor target genes. May play a role in the silencing of fetal globin genes. Recruits the 5FMC complex to ZNF148, leading to desumoylation of ZNF148 and subsequent transactivation of ZNF148 target genes. Plays an important role in the tumorigenicity of glioblastoma cells. Binds to 5-hydroxymethylcytosine (5hmC) and associates with the methylosome complex containing PRMT1, PRMT5, MEP50 and ERH. The CHTOP-methylosome complex associated with 5hmC is recruited to selective sites on the chromosome, where it methylates H4R3 and activates the transcription of genes involved in glioblastomagenesis. In terms of biological role, required for effective mRNA nuclear export and is a component of the TREX complex which is thought to couple mRNA transcription, processing and nuclear export, and specifically associates with spliced mRNA and not with unspliced pre-mRNA. TREX is recruited to spliced mRNAs by a transcription-independent mechanism, binds to mRNA upstream of the exon-junction complex (EJC) and is recruited in a splicing- and cap-dependent manner to a region near the 5' end of the mRNA where it functions in mRNA export to the cytoplasm via the TAP/NFX1 pathway. The TREX complex is essential for the export of Kaposi's sarcoma-associated herpesvirus (KSHV) intronless mRNAs and infectious virus production. Stimulates DDX39B ATPase and helicase activities. In cooperation with ALYREF/THOC4 enhances NXF1 RNA binding activity. This Homo sapiens (Human) protein is Chromatin target of PRMT1 protein (CHTOP).